A 480-amino-acid chain; its full sequence is Aromatic-L-amino-acid decarboxylase (480 aa).

Met1 bears the N-acetylmethionine mark. 2 consecutive repeat copies span residues 58–115 and 118–178. The segment at 58 to 178 is 2 X approximate tandem repeats; the sequence is KDIEKIIMPG…AASPEFTQAA (121 aa). Thr82 contributes to the substrate binding site. 2 residues coordinate pyridoxal 5'-phosphate: Ala148 and Ser149. His192 is a binding site for substrate. Residues Thr246 and Asn300 each contribute to the pyridoxal 5'-phosphate site. The residue at position 303 (Lys303) is an N6-(pyridoxal phosphate)lysine.

Belongs to the group II decarboxylase family. Homodimer. Pyridoxal 5'-phosphate serves as cofactor.

The catalysed reaction is L-dopa + H(+) = dopamine + CO2. It catalyses the reaction 5-hydroxy-L-tryptophan + H(+) = serotonin + CO2. The protein operates within catecholamine biosynthesis; dopamine biosynthesis; dopamine from L-tyrosine: step 2/2. In terms of biological role, catalyzes the decarboxylation of L-3,4-dihydroxyphenylalanine (DOPA) to dopamine and L-5-hydroxytryptophan to serotonin. The sequence is that of Aromatic-L-amino-acid decarboxylase (Ddc) from Mus musculus (Mouse).